The sequence spans 350 residues: Phosphotriesterase-related protein (350 aa).

Histidine 22, histidine 24, glutamate 169, histidine 201, histidine 230, and aspartate 298 together coordinate a divalent metal cation.

Belongs to the metallo-dependent hydrolases superfamily. Phosphotriesterase family. Requires a divalent metal cation as cofactor.

This chain is Phosphotriesterase-related protein, found in Drosophila erecta (Fruit fly).